A 204-amino-acid chain; its full sequence is LexA repressor (204 aa).

The H-T-H motif DNA-binding region spans Arg28–Lys48. Catalysis depends on for autocatalytic cleavage activity residues Ser125 and Lys162.

The protein belongs to the peptidase S24 family. As to quaternary structure, homodimer.

The enzyme catalyses Hydrolysis of Ala-|-Gly bond in repressor LexA.. Represses a number of genes involved in the response to DNA damage (SOS response), including recA and lexA. In the presence of single-stranded DNA, RecA interacts with LexA causing an autocatalytic cleavage which disrupts the DNA-binding part of LexA, leading to derepression of the SOS regulon and eventually DNA repair. The sequence is that of LexA repressor from Pseudomonas aeruginosa (strain LESB58).